Reading from the N-terminus, the 251-residue chain is Adenosine 5'-phosphosulfate reductase (251 aa).

The [4Fe-4S] cluster site is built by Cys-121, Cys-122, Cys-204, and Cys-207. Cys-232 serves as the catalytic Nucleophile; cysteine thiosulfonate intermediate.

It belongs to the PAPS reductase family. CysH subfamily. [4Fe-4S] cluster is required as a cofactor.

The protein resides in the cytoplasm. The enzyme catalyses [thioredoxin]-disulfide + sulfite + AMP + 2 H(+) = adenosine 5'-phosphosulfate + [thioredoxin]-dithiol. Its pathway is sulfur metabolism; hydrogen sulfide biosynthesis; sulfite from sulfate. Functionally, catalyzes the formation of sulfite from adenosine 5'-phosphosulfate (APS) using thioredoxin as an electron donor. This Sinorhizobium fredii (strain NBRC 101917 / NGR234) protein is Adenosine 5'-phosphosulfate reductase.